Consider the following 228-residue polypeptide: Cytochrome c oxidase subunit 2 (228 aa).

The Mitochondrial intermembrane segment spans residues 1-14; the sequence is MAYPFQLGFQDATS. The helical transmembrane segment at 15–45 threads the bilayer; that stretch reads PIMEELLHFHDHTLMIVFLISSLVLYIISLM. Residues 46-59 lie on the Mitochondrial matrix side of the membrane; it reads LTTKLTHTSTMDAQ. Residues 60–87 form a helical membrane-spanning segment; the sequence is EVETIWTILPAIILILIALPSLRILYMM. Over 88–228 the chain is Mitochondrial intermembrane; sequence DEINNPALTV…FEKWSTSMLT (141 aa). H161, C196, E198, C200, H204, and M207 together coordinate Cu cation. E198 serves as a coordination point for Mg(2+). Y218 carries the post-translational modification Phosphotyrosine.

It belongs to the cytochrome c oxidase subunit 2 family. Component of the cytochrome c oxidase (complex IV, CIV), a multisubunit enzyme composed of 14 subunits. The complex is composed of a catalytic core of 3 subunits MT-CO1, MT-CO2 and MT-CO3, encoded in the mitochondrial DNA, and 11 supernumerary subunits COX4I, COX5A, COX5B, COX6A, COX6B, COX6C, COX7A, COX7B, COX7C, COX8 and NDUFA4, which are encoded in the nuclear genome. The complex exists as a monomer or a dimer and forms supercomplexes (SCs) in the inner mitochondrial membrane with NADH-ubiquinone oxidoreductase (complex I, CI) and ubiquinol-cytochrome c oxidoreductase (cytochrome b-c1 complex, complex III, CIII), resulting in different assemblies (supercomplex SCI(1)III(2)IV(1) and megacomplex MCI(2)III(2)IV(2)). Found in a complex with TMEM177, COA6, COX18, COX20, SCO1 and SCO2. Interacts with TMEM177 in a COX20-dependent manner. Interacts with COX20. Interacts with COX16. The cofactor is Cu cation.

It localises to the mitochondrion inner membrane. It catalyses the reaction 4 Fe(II)-[cytochrome c] + O2 + 8 H(+)(in) = 4 Fe(III)-[cytochrome c] + 2 H2O + 4 H(+)(out). In terms of biological role, component of the cytochrome c oxidase, the last enzyme in the mitochondrial electron transport chain which drives oxidative phosphorylation. The respiratory chain contains 3 multisubunit complexes succinate dehydrogenase (complex II, CII), ubiquinol-cytochrome c oxidoreductase (cytochrome b-c1 complex, complex III, CIII) and cytochrome c oxidase (complex IV, CIV), that cooperate to transfer electrons derived from NADH and succinate to molecular oxygen, creating an electrochemical gradient over the inner membrane that drives transmembrane transport and the ATP synthase. Cytochrome c oxidase is the component of the respiratory chain that catalyzes the reduction of oxygen to water. Electrons originating from reduced cytochrome c in the intermembrane space (IMS) are transferred via the dinuclear copper A center (CU(A)) of subunit 2 and heme A of subunit 1 to the active site in subunit 1, a binuclear center (BNC) formed by heme A3 and copper B (CU(B)). The BNC reduces molecular oxygen to 2 water molecules using 4 electrons from cytochrome c in the IMS and 4 protons from the mitochondrial matrix. The sequence is that of Cytochrome c oxidase subunit 2 (MT-CO2) from Sus scrofa (Pig).